Here is a 323-residue protein sequence, read N- to C-terminus: CD-NTase-associated protein 12 (323 aa).

In terms of domain architecture, TIR spans 4–120 (RIFIGSSSEQ…LDGITVAKFT (117 aa)). Glu-84 is a catalytic residue. The STING domain stretch occupies residues 154-323 (STALAIGYYN…YVNVLTNVKL (170 aa)). Ser-164, Phe-165, Arg-234, Pro-237, Asp-259, Ser-262, and Thr-263 together coordinate 3',3'-c-di-GMP.

It in the C-terminal section; belongs to the bacterial STING family. As to quaternary structure, forms homodimers which subsequently form filaments. In vitro in the presence of c-di-GMP forms filaments up to 300 nm in length with an ordered array of parallel-stacked subunits, where the TIR domains form one face of the filament and the STING domains form the other face. Antiparallel double-filament structures are also seen. 3'3'-cGAMP weakly induces filament formation, while 2'3'-cGAMP does not.

The catalysed reaction is NAD(+) + H2O = ADP-D-ribose + nicotinamide + H(+). NAD(+) hydrolase activity is strongly stimulated by c-di-GMP, weakly by 3'3'-cGAMP, very weakly by c-di-AMP and not at all by 2'3'-cGAMP. Self-association of TIR domains is required for NADase activity. In terms of biological role, effector protein of a CBASS antiviral system with NAD(+) hydrolase activity. CBASS (cyclic oligonucleotide-based antiphage signaling system) provides immunity against bacteriophage. The CD-NTase protein synthesizes cyclic nucleotides in response to infection; these serve as specific second messenger signals. The signals activate a diverse range of effectors, leading to bacterial cell death and thus abortive phage infection. A type I-D(GG) CBASS system. Its function is as follows. Upon activation by 3'3'-c-di-GMP forms filaments which hydrolyze NAD(+); filament formation is required for enzyme activation. Induction in an E.coli strain that synthesizes c-di-GMP leads to significant growth inhibition. Binds c-di-GMP and 3'3'-cGAMP (3'3'-cyclic GMP-AMP), but not c-di-AMP, 2'3'-cGAMP or cUMP-AMP. This Sphingobacterium faecium (strain DSM 11690 / JCM 21820 / NBRC 15299 / NCIMB 13408 / KS 0470) protein is CD-NTase-associated protein 12.